A 750-amino-acid chain; its full sequence is Photosystem I P700 chlorophyll a apoprotein A1 (750 aa).

The next 8 helical transmembrane spans lie at 70 to 93, 156 to 179, 195 to 219, 291 to 309, 346 to 369, 385 to 411, 433 to 455, and 531 to 549; these read VFSA…FHGA, LYCT…FHYH, LNHH…HVSL, IAHH…GHMY, WHAQ…HHMY, LSLF…IFMV, AIIS…LYIH, and FLVH…LILL. [4Fe-4S] cluster is bound by residues C573 and C582. The next 2 helical transmembrane spans lie at 589–610 and 664–686; these read HVFL…HFSW and LSAY…MFLF. Residue H675 participates in chlorophyll a' binding. 2 residues coordinate chlorophyll a: M683 and Y691. W692 is a phylloquinone binding site. The helical transmembrane segment at 724 to 744 threads the bilayer; sequence AVGVTHYLLGGIATTWAFFLA.

It belongs to the PsaA/PsaB family. The PsaA/B heterodimer binds the P700 chlorophyll special pair and subsequent electron acceptors. PSI consists of a core antenna complex that captures photons, and an electron transfer chain that converts photonic excitation into a charge separation. The eukaryotic PSI reaction center is composed of at least 11 subunits. The cofactor is P700 is a chlorophyll a/chlorophyll a' dimer, A0 is one or more chlorophyll a, A1 is one or both phylloquinones and FX is a shared 4Fe-4S iron-sulfur center..

The protein resides in the plastid. It localises to the chloroplast thylakoid membrane. The enzyme catalyses reduced [plastocyanin] + hnu + oxidized [2Fe-2S]-[ferredoxin] = oxidized [plastocyanin] + reduced [2Fe-2S]-[ferredoxin]. In terms of biological role, psaA and PsaB bind P700, the primary electron donor of photosystem I (PSI), as well as the electron acceptors A0, A1 and FX. PSI is a plastocyanin-ferredoxin oxidoreductase, converting photonic excitation into a charge separation, which transfers an electron from the donor P700 chlorophyll pair to the spectroscopically characterized acceptors A0, A1, FX, FA and FB in turn. Oxidized P700 is reduced on the lumenal side of the thylakoid membrane by plastocyanin. The chain is Photosystem I P700 chlorophyll a apoprotein A1 from Amborella trichopoda.